Here is a 199-residue protein sequence, read N- to C-terminus: NADH-quinone oxidoreductase subunit C (199 aa).

This sequence belongs to the complex I 30 kDa subunit family. NDH-1 is composed of 14 different subunits. Subunits NuoB, C, D, E, F, and G constitute the peripheral sector of the complex.

It localises to the cell inner membrane. It catalyses the reaction a quinone + NADH + 5 H(+)(in) = a quinol + NAD(+) + 4 H(+)(out). NDH-1 shuttles electrons from NADH, via FMN and iron-sulfur (Fe-S) centers, to quinones in the respiratory chain. The immediate electron acceptor for the enzyme in this species is believed to be ubiquinone. Couples the redox reaction to proton translocation (for every two electrons transferred, four hydrogen ions are translocated across the cytoplasmic membrane), and thus conserves the redox energy in a proton gradient. The protein is NADH-quinone oxidoreductase subunit C of Leptothrix cholodnii (strain ATCC 51168 / LMG 8142 / SP-6) (Leptothrix discophora (strain SP-6)).